The primary structure comprises 1056 residues: ISWI chromatin-remodeling complex ATPase CHR11 (1056 aa).

The segment covering 1-10 (MARNSNSDEA) has biased composition (low complexity). Disordered regions lie at residues 1 to 80 (MARN…SKRE) and 133 to 175 (KSDG…GSGN). Acidic residues-rich tracts occupy residues 11-32 (FSSE…EELE) and 60-73 (PVED…DEEK). Positions 12 to 105 (SSEEEEERVK…QEMLESQNAS (94 aa)) form a coiled coil. Basic residues predominate over residues 141–151 (KKAKGRGRHAS). Acidic residues predominate over residues 155-169 (EEEEDEEYLKEEEDG). Positions 201-366 (IRLYENGING…WALLNFLLPE (166 aa)) constitute a Helicase ATP-binding domain. Residue 214-221 (DEMGLGKT) coordinates ATP. The DEAH box signature appears at 317-320 (DEAH). One can recognise a Helicase C-terminal domain in the interval 494 to 645 (LLDKLLPKLK…ALVIQQGRLA (152 aa)). Disordered stretches follow at residues 738-774 (WNDP…PRIP) and 814-833 (IDVE…EVEE). Acidic residues predominate over residues 815–833 (DVEEPEEGGDPLTTEEVEE). SANT domains are found at residues 840–892 (EGFS…ERYK) and 941–1002 (QNKG…DTLI). Residues 1011 to 1056 (EFDERERQARKEKKLAKSATPSKRPLGRQASESPSSTKKRKHLSMR) are disordered. Residues 1047–1056 (TKKRKHLSMR) show a composition bias toward basic residues.

The protein belongs to the SNF2/RAD54 helicase family. ISWI subfamily. Interacts with RLT1 and RLT2. Interacts (via C-terminus) with RLT1 (via the DDT domain), RLT2 (via the DDT domain), PTM (via the DDT domain) and DDR4 (via the DDT domain). Binds to FGT1. In terms of tissue distribution, highly expressed in growing tissues such as inflorescence and flower meristems, young leaves and floral organs. Expressed in roots, rosette and cauline leaves, stems, flowers, inflorescences and siliques.

It localises to the nucleus. Possesses intrinsic ATP-dependent nucleosome-remodeling activity. Constitutes the catalytic subunit of several complexes capable of forming ordered nucleosome arrays on chromatin. Involved in the formation of nucleosome distribution patterns. Involved in nuclear proliferation during megagametogenesis and cell expansion in the sporophyte. Required for the maintenance of the plant vegetative phase. In association with RLT1 or RLT2 may prevent the early activation of the vegetative-to-reproductive transition by regulating key genes that contribute to flower timing, such as FT, SEP1, SEP3, AGL8/FUL, SOC1 and FLC. Necessary to acquire heat stress (HS) memory. The protein is ISWI chromatin-remodeling complex ATPase CHR11 of Arabidopsis thaliana (Mouse-ear cress).